A 136-amino-acid chain; its full sequence is Photosystem II extrinsic protein U (136 aa).

The first 28 residues, 1–28, serve as a signal peptide directing secretion; the sequence is MKQLAQRLFSLALVLALVLGISVQSAQA.

It belongs to the PsbU family. In terms of assembly, PSII is composed of 1 copy each of membrane proteins PsbA, PsbB, PsbC, PsbD, PsbE, PsbF, PsbH, PsbI, PsbJ, PsbK, PsbL, PsbM, PsbT, PsbX, PsbY, PsbZ, Psb30/Ycf12, peripheral proteins PsbO, CyanoQ (PsbQ), PsbU, PsbV and a large number of cofactors. It forms dimeric complexes.

The protein localises to the cellular thylakoid membrane. Functionally, one of the extrinsic, lumenal subunits of photosystem II (PSII). PSII is a light-driven water plastoquinone oxidoreductase, using light energy to abstract electrons from H(2)O, generating a proton gradient subsequently used for ATP formation. The extrinsic proteins stabilize the structure of photosystem II oxygen-evolving complex (OEC), the ion environment of oxygen evolution and protect the OEC against heat-induced inactivation. The polypeptide is Photosystem II extrinsic protein U (Synechococcus elongatus (strain ATCC 33912 / PCC 7942 / FACHB-805) (Anacystis nidulans R2)).